A 306-amino-acid chain; its full sequence is Plant-type L-asparaginase (306 aa).

Thr176 functions as the Nucleophile in the catalytic mechanism. Substrate is bound by residues 203–206 (RVGD) and 225–228 (TGLG).

This sequence belongs to the Ntn-hydrolase family. As to quaternary structure, heterotetramer of two alpha and two beta chains arranged as a dimer of alpha/beta heterodimers. Post-translationally, autocleaved. Generates the alpha and beta subunits. The N-terminal residue of the beta subunit is thought to be responsible for the nucleophile hydrolase activity.

It catalyses the reaction L-asparagine + H2O = L-aspartate + NH4(+). Its function is as follows. Catalyzes the hydrolysis of L-asparagine into L-aspartate and ammonia. The protein is Plant-type L-asparaginase of Pyrococcus furiosus (strain ATCC 43587 / DSM 3638 / JCM 8422 / Vc1).